Reading from the N-terminus, the 279-residue chain is Large ribosomal subunit protein uL2 (279 aa).

Residues 223-279 are disordered; the sequence is VVMNPVDHPHGGGEGRTSGGRHPVSPWGQPTKGYKTRRSARPSDKFIVQKRKRNRNR. The span at 270-279 shows a compositional bias: basic residues; it reads VQKRKRNRNR.

It belongs to the universal ribosomal protein uL2 family. As to quaternary structure, part of the 50S ribosomal subunit. Forms a bridge to the 30S subunit in the 70S ribosome.

Functionally, one of the primary rRNA binding proteins. Required for association of the 30S and 50S subunits to form the 70S ribosome, for tRNA binding and peptide bond formation. It has been suggested to have peptidyltransferase activity; this is somewhat controversial. Makes several contacts with the 16S rRNA in the 70S ribosome. In Leptospira borgpetersenii serovar Hardjo-bovis (strain JB197), this protein is Large ribosomal subunit protein uL2.